Reading from the N-terminus, the 520-residue chain is Beta-glucosidase 45 (520 aa).

Positions 1–22 (MKNLTSFVIVILLQSLLFHVYG) are cleaved as a signal peptide. Asn3 carries an N-linked (GlcNAc...) asparagine glycan. A beta-D-glucoside-binding positions include Gln52, His155, and 200–201 (NE). The Proton donor role is filled by Glu201. Cys220 and Cys227 are joined by a disulfide. Residue Asn226 is glycosylated (N-linked (GlcNAc...) asparagine). A beta-D-glucoside is bound at residue Tyr344. An intrachain disulfide couples Cys352 to Cys357. Residue Asn378 is glycosylated (N-linked (GlcNAc...) asparagine). Residue Glu417 participates in a beta-D-glucoside binding. Glu417 (nucleophile) is an active-site residue. An N-linked (GlcNAc...) asparagine glycan is attached at Asn435. A beta-D-glucoside is bound by residues Trp466, 473–474 (EW), and Phe482.

The protein belongs to the glycosyl hydrolase 1 family. In terms of tissue distribution, expressed in stems and siliques.

It carries out the reaction Hydrolysis of terminal, non-reducing beta-D-glucosyl residues with release of beta-D-glucose.. Its function is as follows. Hydrolyzes p-nitrophenyl beta-D-glucoside and natural glucosides such as syringin, coniferin and p-coumaryl alcohol glucoside. May be involved in lignification by hydrolyzing monolignol glucosides. The polypeptide is Beta-glucosidase 45 (Arabidopsis thaliana (Mouse-ear cress)).